Here is a 340-residue protein sequence, read N- to C-terminus: tRNA N6-adenosine threonylcarbamoyltransferase (340 aa).

2 residues coordinate Fe cation: histidine 113 and histidine 117. Residues leucine 135 to glycine 139, aspartate 169, glycine 182, aspartate 186, and asparagine 274 each bind substrate. Fe cation is bound at residue aspartate 302.

Belongs to the KAE1 / TsaD family. Requires Fe(2+) as cofactor.

Its subcellular location is the cytoplasm. The enzyme catalyses L-threonylcarbamoyladenylate + adenosine(37) in tRNA = N(6)-L-threonylcarbamoyladenosine(37) in tRNA + AMP + H(+). Functionally, required for the formation of a threonylcarbamoyl group on adenosine at position 37 (t(6)A37) in tRNAs that read codons beginning with adenine. Is involved in the transfer of the threonylcarbamoyl moiety of threonylcarbamoyl-AMP (TC-AMP) to the N6 group of A37, together with TsaE and TsaB. TsaD likely plays a direct catalytic role in this reaction. The polypeptide is tRNA N6-adenosine threonylcarbamoyltransferase (Mycolicibacterium gilvum (strain PYR-GCK) (Mycobacterium gilvum (strain PYR-GCK))).